We begin with the raw amino-acid sequence, 103 residues long: Large ribosomal subunit protein bL21 (103 aa).

It belongs to the bacterial ribosomal protein bL21 family. Part of the 50S ribosomal subunit. Contacts protein L20.

In terms of biological role, this protein binds to 23S rRNA in the presence of protein L20. The polypeptide is Large ribosomal subunit protein bL21 (Aliivibrio fischeri (strain ATCC 700601 / ES114) (Vibrio fischeri)).